A 286-amino-acid polypeptide reads, in one-letter code: Probable endonuclease 4 (286 aa).

Residues His-67, His-107, Glu-146, Asp-180, His-183, His-217, Asp-230, His-232, and Glu-262 each coordinate Zn(2+).

The protein belongs to the AP endonuclease 2 family. It depends on Zn(2+) as a cofactor.

It carries out the reaction Endonucleolytic cleavage to 5'-phosphooligonucleotide end-products.. Its function is as follows. Endonuclease IV plays a role in DNA repair. It cleaves phosphodiester bonds at apurinic or apyrimidinic (AP) sites, generating a 3'-hydroxyl group and a 5'-terminal sugar phosphate. In Methanosphaerula palustris (strain ATCC BAA-1556 / DSM 19958 / E1-9c), this protein is Probable endonuclease 4.